The primary structure comprises 204 residues: Somatotropin (204 aa).

The signal sequence occupies residues 1–17 (MDRVILLLSVVSLGVSS). The residue at position 18 (Gln18) is a Pyrrolidone carboxylic acid. Residue His36 participates in Zn(2+) binding. The cysteines at positions 69 and 177 are disulfide-linked. Glu186 contacts Zn(2+). A disulfide bridge connects residues Cys194 and Cys202.

Belongs to the somatotropin/prolactin family.

The protein localises to the secreted. In terms of biological role, growth hormone plays an important role in growth control and is involved in the regulation of several anabolic processes. Implicated as an osmoregulatory substance important for seawater adaptation. This Sebastes schlegelii (Korean rockfish) protein is Somatotropin (gh).